Here is a 291-residue protein sequence, read N- to C-terminus: Small ribosomal subunit protein uS3 (291 aa).

The KH type-2 domain maps to I39–K110.

The protein belongs to the universal ribosomal protein uS3 family. In terms of assembly, part of the 30S ribosomal subunit. Forms a tight complex with proteins S10 and S14.

Its function is as follows. Binds the lower part of the 30S subunit head. Binds mRNA in the 70S ribosome, positioning it for translation. The protein is Small ribosomal subunit protein uS3 of Borreliella afzelii (strain PKo) (Borrelia afzelii).